We begin with the raw amino-acid sequence, 161 residues long: Thy-1 membrane glycoprotein (161 aa).

Residues 1-19 (MNLAISIALLLTVLQVSRG) form the signal peptide. Gln20 bears the Pyrrolidone carboxylic acid mark. An Ig-like V-type domain is found at 20 to 126 (QKVTSLTACL…SQNVTVLRDK (107 aa)). 2 disulfide bridges follow: Cys28/Cys130 and Cys38/Cys104. 2 N-linked (GlcNAc...) asparagine glycosylation sites follow: Asn42 and Asn79. Ser82 is subject to Phosphoserine. Asn119 is a glycosylation site (N-linked (GlcNAc...) asparagine). Residue Cys130 is the site of GPI-anchor amidated cysteine; alternate attachment. Residues 131 to 161 (EGISLLAQNTSWLXLLLLSLSLLQATDFMSL) constitute a propeptide, removed in mature form. Asn139 carries N-linked (GlcNAc...) asparagine glycosylation.

It localises to the cell membrane. May play a role in cell-cell or cell-ligand interactions during synaptogenesis and other events in the brain. This is Thy-1 membrane glycoprotein (THY1) from Macaca mulatta (Rhesus macaque).